The sequence spans 113 residues: Transcription initiation factor IIA subunit 2 (113 aa).

The protein belongs to the TFIIA subunit 2 family. In terms of assembly, TFIIA is a heterodimer of the large unprocessed subunit 1 and a small subunit gamma. It was originally believed to be a heterotrimer of an alpha, a beta and a gamma subunit.

It localises to the nucleus. Functionally, TFIIA is a component of the transcription machinery of RNA polymerase II and plays an important role in transcriptional activation. TFIIA in a complex with TBP mediates transcriptional activity. The sequence is that of Transcription initiation factor IIA subunit 2 from Caenorhabditis elegans.